The chain runs to 357 residues: UDP-N-acetylglucosamine--N-acetylmuramyl-(pentapeptide) pyrophosphoryl-undecaprenol N-acetylglucosamine transferase (357 aa).

UDP-N-acetyl-alpha-D-glucosamine-binding positions include 10-12 (TGG), Asn-124, Ser-189, Ile-244, and Gln-289.

The protein belongs to the glycosyltransferase 28 family. MurG subfamily.

It localises to the cell membrane. The catalysed reaction is Mur2Ac(oyl-L-Ala-gamma-D-Glu-L-Lys-D-Ala-D-Ala)-di-trans,octa-cis-undecaprenyl diphosphate + UDP-N-acetyl-alpha-D-glucosamine = beta-D-GlcNAc-(1-&gt;4)-Mur2Ac(oyl-L-Ala-gamma-D-Glu-L-Lys-D-Ala-D-Ala)-di-trans,octa-cis-undecaprenyl diphosphate + UDP + H(+). The protein operates within cell wall biogenesis; peptidoglycan biosynthesis. Functionally, cell wall formation. Catalyzes the transfer of a GlcNAc subunit on undecaprenyl-pyrophosphoryl-MurNAc-pentapeptide (lipid intermediate I) to form undecaprenyl-pyrophosphoryl-MurNAc-(pentapeptide)GlcNAc (lipid intermediate II). The polypeptide is UDP-N-acetylglucosamine--N-acetylmuramyl-(pentapeptide) pyrophosphoryl-undecaprenol N-acetylglucosamine transferase (Lactococcus lactis subsp. lactis (strain IL1403) (Streptococcus lactis)).